The sequence spans 102 residues: Small ribosomal subunit protein uS10 (102 aa).

This sequence belongs to the universal ribosomal protein uS10 family. As to quaternary structure, part of the 30S ribosomal subunit.

Its function is as follows. Involved in the binding of tRNA to the ribosomes. The sequence is that of Small ribosomal subunit protein uS10 from Mycoplasma capricolum subsp. capricolum (strain California kid / ATCC 27343 / NCTC 10154).